We begin with the raw amino-acid sequence, 658 residues long: Structure-specific endonuclease subunit SLX4 (658 aa).

Disordered regions lie at residues 17–37, 74–123, and 327–383; these read VDSD…IPGD, GATE…KSIT, and QPGV…QVLQ. Composition is skewed to low complexity over residues 75-90 and 99-108; these read ATES…PPAK and KAAGRTSTGT. Positions 365 to 374 are enriched in polar residues; the sequence is FPKSPTSTPE.

This sequence belongs to the SLX4 family. Forms a heterodimer with SLX1. Post-translationally, phosphorylated in response to DNA damage.

The protein localises to the nucleus. Regulatory subunit of the SLX1-SLX4 structure-specific endonuclease that resolves DNA secondary structures generated during DNA repair and recombination. Has endonuclease activity towards branched DNA substrates, introducing single-strand cuts in duplex DNA close to junctions with ss-DNA. This chain is Structure-specific endonuclease subunit SLX4, found in Lachancea thermotolerans (strain ATCC 56472 / CBS 6340 / NRRL Y-8284) (Yeast).